Consider the following 236-residue polypeptide: Small ribosomal subunit protein uS2c (236 aa).

It belongs to the universal ribosomal protein uS2 family.

It localises to the plastid. The protein is Small ribosomal subunit protein uS2c (rps2) of Cuscuta obtusiflora (Peruvian dodder).